The sequence spans 694 residues: Protein NPGR1 (694 aa).

The interval 12–40 (FEDQPGSPESLATRDFSASGLSSRNGGGD) is disordered. TPR repeat units lie at residues 32–65 (LSSRNGGGDWDSKLEDIQVDEAESTLKEALSLNY), 66–101 (EEARALLGRLEYQRGNFDAALQVFKGIDIKVLTPRI), 135–168 (LEAILLKARSLEELGSYKEAAEECKIILDVVENA), 188–221 (QKALELLPLLWKKAGNHHETIASYRRALSRPWNL), 307–340 (GERWYLLSLCYSAAGIDKAAINLLKMALGPSESR), 551–584 (TEAWQDLASVYGKLGSWSDAETCLEKARSMCYYS), 585–618 (PRGWNETGLCLEAKSLHEEALISFFLSLSIEPDH), 620–654 (PSIVSIAEVMMKSGDESLPTAKSFLMNALRLDPRN), and 655–688 (HDAWMKLGHVAKKQGLSQQAAEFYQAAYELELSA).

Interacts with calmodulin in a calcium-dependent manner. Expressed in pollen, flowers, fruits and leaves.

This is Protein NPGR1 from Arabidopsis thaliana (Mouse-ear cress).